Reading from the N-terminus, the 422-residue chain is Histidine--tRNA ligase (422 aa).

It belongs to the class-II aminoacyl-tRNA synthetase family. As to quaternary structure, homodimer.

The protein resides in the cytoplasm. It catalyses the reaction tRNA(His) + L-histidine + ATP = L-histidyl-tRNA(His) + AMP + diphosphate + H(+). The sequence is that of Histidine--tRNA ligase (hisS) from Photobacterium profundum (strain SS9).